Consider the following 425-residue polypeptide: Histone-binding protein RBBP4 (425 aa).

A2 is modified (N-acetylalanine). An N6-acetyllysine; alternate modification is found at K4. A Glycyl lysine isopeptide (Lys-Gly) (interchain with G-Cter in SUMO2); alternate cross-link involves residue K4. Residue K4 forms a Glycyl lysine isopeptide (Lys-Gly) (interchain with G-Cter in ubiquitin); alternate linkage. WD repeat units lie at residues 32–125, 126–175, 176–223, 225–270, 271–314, 315–371, and 372–404; these read YDLV…NHEG, EVNR…RLRG, HQKE…KTIF, GHTA…HSVD, AHTA…HSFE, SHKD…FIHG, and GHTA…VWQM. S110 carries the phosphoserine modification. At K160 the chain carries N6-acetyllysine; alternate. K160 is covalently cross-linked (Glycyl lysine isopeptide (Lys-Gly) (interchain with G-Cter in SUMO2); alternate). The residue at position 355 (S355) is a Phosphoserine.

The protein belongs to the WD repeat RBAP46/RBAP48/MSI1 family. As to quaternary structure, binds directly to helix 1 of the histone fold of histone H4, a region that is not accessible when H4 is in chromatin. Subunit of the chromatin assembly factor 1 (CAF-1) complex, which is composed of RBBP4, CHAF1B and CHAF1A. Subunit of the core histone deacetylase (HDAC) complex, which is composed of HDAC1, HDAC2, RBBP4 and RBBP7. The core HDAC complex associates with SIN3A, ARID4B/SAP180, SAP18, SAP30, SAP130, SUDS3/SAP45 and possibly ARID4A/RBP1 and ING1 to form the SIN3 HDAC complex. Component of the nucleosome remodeling and deacetylase (NuRD) repressor complex, composed of core proteins MTA1, MTA2, MTA3, RBBP4, RBBP7, HDAC1, HDAC2, MBD2, MBD3, and peripherally associated proteins CDK2AP1, CDK2AP2, GATAD2A, GATAD2B, CHD3, CHD4 and CHD5. The exact stoichiometry of the NuRD complex is unknown, and some subunits such as MBD2 and MBD3, GATAD2A and GATAD2B, and CHD3, CHD4 and CHD5 define mutually exclusive NuRD complexes. Interacts with ZNF512B; the interaction is direct and may play a role in repressing gene expression. The NuRD complex may also interact with MBD3L1 and MBD3L2. Component of the PRC2 complex, which consists of the core subunits EED, EZH1 or EZH2, SUZ12, and RBBP4, and various combinations of accessory subunits including AEBP2, JARID2, PHF19, MTF2 and EPOP. Forms a monomeric PRC2.2 (class 2) complex consisting of at least SUZ12, RBBP4, AEBP2 and JARID2. Forms a dimeric PRC2.1 (class 1, PRC-PCL) complex consisting of at least SUZ12, RBBP4, and PHF19; PHF19 stabilizes the dimeric structure which enhances PRC2 interaction with chromatin. Component of the NURF-1 ISWI chromatin remodeling complex (also called the nucleosome-remodeling factor (NURF) complex) at least composed of SMARCA1 (isoform 2), BPTF, RBBP4 and RBBP7. Within the complex interacts with isoform 2 of SMARCA1. Component of the BPFT-SMARCA1 complex at least composed of SMARCA1 (isoform 1), BPFT, RBBP4 and RBBP7; the complex is catalytically inactive and does not remodel chromatin. Within the complex interacts with isoform 1 of SMARCA1. Interacts with the ISWI chromatin remodeling complex component SMARCA5; the interaction is direct. Interacts with the viral protein-binding domain of the retinoblastoma protein (RB1). Component of the DREAM complex (also named LINC complex) at least composed of E2F4, E2F5, LIN9, LIN37, LIN52, LIN54, MYBL1, MYBL2, RBL1, RBL2, RBBP4, TFDP1 and TFDP2. The complex exists in quiescent cells where it represses cell cycle-dependent genes. It dissociates in S phase when LIN9, LIN37, LIN52 and LIN54 form a subcomplex that binds to MYBL2. Found in a complex composed of at least SINHCAF, SIN3A, HDAC1, SAP30, RBBP4, OGT and TET1. Interacts with ZNF827; the interaction is direct and recruits RBBP4 to telomeres. Interacts with MTA1; the interaction is direct and mutually exclusive with binding histone H4. Interacts with ARMC12 (via ARM domains). Interacts with BRCA1. Interacts with CDK2AP1. Interacts with CREBBP, and this interaction may be enhanced by the binding of phosphorylated CREB1 to CREBBP. Interacts with ERCC6. Interacts with HDAC7. Interacts with PHF6. Interacts with PWWP2B. Interacts with SPEN/MINT. Interacts with SUV39H1.

It localises to the nucleus. The protein localises to the chromosome. It is found in the telomere. Core histone-binding subunit that may target chromatin assembly factors, chromatin remodeling factors and histone deacetylases to their histone substrates in a manner that is regulated by nucleosomal DNA. Component of the chromatin assembly factor 1 (CAF-1) complex, which is required for chromatin assembly following DNA replication and DNA repair. Component of the core histone deacetylase (HDAC) complex, which promotes histone deacetylation and consequent transcriptional repression. Component of the nucleosome remodeling and histone deacetylase complex (the NuRD complex), which promotes transcriptional repression by histone deacetylation and nucleosome remodeling. Component of the PRC2 complex, which promotes repression of homeotic genes during development. Component of the NURF (nucleosome remodeling factor) complex. This is Histone-binding protein RBBP4 (RBBP4) from Pongo abelii (Sumatran orangutan).